The primary structure comprises 327 residues: L-lactate dehydrogenase 1 (327 aa).

NAD(+) contacts are provided by residues valine 21, aspartate 42, lysine 47, tyrosine 72, and glycine 86–alanine 87. Residues glutamine 89, arginine 95, and asparagine 127 to aspartate 130 each bind substrate. NAD(+)-binding positions include alanine 125–asparagine 127 and serine 150. Aspartate 155–arginine 158 contacts substrate. 2 residues coordinate beta-D-fructose 1,6-bisphosphate: arginine 160 and histidine 175. The active-site Proton acceptor is the histidine 182. Tyrosine 227 is modified (phosphotyrosine). Threonine 236 is a binding site for substrate.

This sequence belongs to the LDH/MDH superfamily. LDH family. In terms of assembly, homotetramer.

The protein localises to the cytoplasm. It carries out the reaction (S)-lactate + NAD(+) = pyruvate + NADH + H(+). The protein operates within fermentation; pyruvate fermentation to lactate; (S)-lactate from pyruvate: step 1/1. Its activity is regulated as follows. Allosterically activated by fructose 1,6-bisphosphate (FBP). Its function is as follows. Catalyzes the conversion of lactate to pyruvate. The sequence is that of L-lactate dehydrogenase 1 from Enterococcus faecalis (strain ATCC 700802 / V583).